The sequence spans 485 residues: Glutamyl-tRNA(Gln) amidotransferase subunit A (485 aa).

Active-site charge relay system residues include K80 and S155. Residue S179 is the Acyl-ester intermediate of the active site.

This sequence belongs to the amidase family. GatA subfamily. As to quaternary structure, heterotrimer of A, B and C subunits.

It catalyses the reaction L-glutamyl-tRNA(Gln) + L-glutamine + ATP + H2O = L-glutaminyl-tRNA(Gln) + L-glutamate + ADP + phosphate + H(+). Its function is as follows. Allows the formation of correctly charged Gln-tRNA(Gln) through the transamidation of misacylated Glu-tRNA(Gln) in organisms which lack glutaminyl-tRNA synthetase. The reaction takes place in the presence of glutamine and ATP through an activated gamma-phospho-Glu-tRNA(Gln). This Endomicrobium trichonymphae protein is Glutamyl-tRNA(Gln) amidotransferase subunit A.